A 208-amino-acid chain; its full sequence is Proheparin-binding EGF-like growth factor (208 aa).

The N-terminal stretch at M1–A19 is a signal peptide. Positions L20–R62 are excised as a propeptide. Residues L20 to T160 lie on the Extracellular side of the membrane. The interval A34–G55 is disordered. A compositionally biased stretch (polar residues) spans G36–Q49. O-linked (GalNAc...) threonine glycosylation is found at T75 and T85. The interval Q81–K104 is disordered. Positions K93–G102 are enriched in basic residues. Residues K104–H144 enclose the EGF-like domain. Cystine bridges form between C108/C121, C116/C132, and C134/C143. Positions P136 to L148 are toxin-binding domain. Residues P149–H208 constitute a propeptide, C-terminal. Residues T161–F184 form a helical membrane-spanning segment. Residues R185–H208 lie on the Cytoplasmic side of the membrane.

Interacts with EGFR and ERBB4. Interacts with FBLN1. O-glycosylated.

Its subcellular location is the secreted. The protein resides in the extracellular space. The protein localises to the cell membrane. Functionally, growth factor that mediates its effects via EGFR, ERBB2 and ERBB4. Required for normal cardiac valve formation and normal heart function. Promotes smooth muscle cell proliferation. May be involved in macrophage-mediated cellular proliferation. It is mitogenic for fibroblasts, but not endothelial cells. It is able to bind EGF receptor/EGFR with higher affinity than EGF itself and is a far more potent mitogen for smooth muscle cells than EGF. Also acts as a diphtheria toxin receptor. The protein is Proheparin-binding EGF-like growth factor (HBEGF) of Chlorocebus aethiops (Green monkey).